We begin with the raw amino-acid sequence, 426 residues long: Serine protease HTRA2, mitochondrial (426 aa).

A compositionally biased stretch (low complexity) spans 31-58 (SSTCNSTNTDNGSHNTNYNSSNNNNNNN). Positions 31–59 (SSTCNSTNTDNGSHNTNYNSSNNNNNNND) are disordered. The chain crosses the membrane as a helical span at residues 71-87 (FLVPFSLGALASSVVAG). Positions 79–82 (ALAS) match the IAP-binding motif. A serine protease region spans residues 143 to 306 (SNGSGFVIEQ…IPIDYVKLFL (164 aa)). Active-site charge relay system residues include H161, D193, and S270. A PDZ domain is found at 329 to 414 (MGITMLTLTP…DLDMVILRGV (86 aa)).

Belongs to the peptidase S1C family. As to quaternary structure, interacts with th/DIAP1 (via BIR 2 domain).

It localises to the mitochondrion intermembrane space. The protein resides in the mitochondrion membrane. The enzyme catalyses Cleavage of non-polar aliphatic amino-acids at the P1 position, with a preference for Val, Ile and Met. At the P2 and P3 positions, Arg is selected most strongly with a secondary preference for other hydrophilic residues.. Serine protease that shows proteolytic activity against a non-specific substrate beta-casein. Promotes or induces cell death either by direct binding to and inhibition of BIRC proteins (also called inhibitor of apoptosis proteins, IAPs), leading to an increase in caspase activity, or by a BIRC inhibition-independent, caspase-independent and serine protease activity-dependent mechanism. Can antagonize antiapoptotic activity of th/Diap1 by directly inducing the degradation of th/Diap1. This Drosophila grimshawi (Hawaiian fruit fly) protein is Serine protease HTRA2, mitochondrial.